A 346-amino-acid polypeptide reads, in one-letter code: UPF0283 membrane protein VIBHAR_01918 (346 aa).

A compositionally biased stretch (basic and acidic residues) spans 1-17 (MSELKQKQVFKEKVMHS). The disordered stretch occupies residues 1-28 (MSELKQKQVFKEKVMHSEEEDVSPELNT). A run of 2 helical transmembrane segments spans residues 73–93 (LFATFAGLVVWQAVDSVITAI) and 98–118 (WLALGWVGFITTIASFGLGAL).

It belongs to the UPF0283 family.

It localises to the cell inner membrane. This chain is UPF0283 membrane protein VIBHAR_01918, found in Vibrio campbellii (strain ATCC BAA-1116).